The sequence spans 209 residues: uncharacterized protein (209 aa).

The N-terminal stretch at 1–17 (MKRLVTGLLALSLFLAA) is a signal peptide. Residues 17 to 105 (ACGQDSDQQK…SNNQANNNQK (89 aa)) form a disordered region. The N-palmitoyl cysteine moiety is linked to residue C18. C18 carries the S-diacylglycerol cysteine lipid modification. Residues 23–70 (DQQKDGNKEKDDKAKTEQQDKKTNDSSKDKKDNKDDSKDVNKDNKDNS) are compositionally biased toward basic and acidic residues. Residues 71–105 (ANDNQQQSNSNATNNDQNQTNNNQSSNNQANNNQK) show a composition bias toward low complexity.

Its subcellular location is the cell membrane. This is an uncharacterized protein from Staphylococcus aureus (strain COL).